The chain runs to 257 residues: Phosphonates import ATP-binding protein PhnC (257 aa).

Positions 7-251 constitute an ABC transporter domain; sequence IQLKDVSKIY…VFTDIYNGGD (245 aa). 40-47 lines the ATP pocket; the sequence is GLSGAGKS.

It belongs to the ABC transporter superfamily. Phosphonates importer (TC 3.A.1.9.1) family. In terms of assembly, the complex is composed of two ATP-binding proteins (PhnC), two transmembrane proteins (PhnE) and a solute-binding protein (PhnD).

It localises to the cell membrane. It carries out the reaction phosphonate(out) + ATP + H2O = phosphonate(in) + ADP + phosphate + H(+). Part of the ABC transporter complex PhnCDE involved in phosphonates import. Responsible for energy coupling to the transport system. The protein is Phosphonates import ATP-binding protein PhnC of Lactobacillus acidophilus (strain ATCC 700396 / NCK56 / N2 / NCFM).